Reading from the N-terminus, the 513-residue chain is Type-2 serine--tRNA ligase (513 aa).

A312 provides a ligand contact to L-serine. Residue C314 coordinates Zn(2+). R344 is a binding site for L-serine. ATP-binding positions include 344–346 (RWE) and 355–356 (RV). Residue 361–363 (RVE) participates in L-serine binding. 2 residues coordinate Zn(2+): E363 and C467. R474 contributes to the ATP binding site.

The protein belongs to the class-II aminoacyl-tRNA synthetase family. Type-2 seryl-tRNA synthetase subfamily. In terms of assembly, homodimer. Requires Zn(2+) as cofactor.

It is found in the cytoplasm. It carries out the reaction tRNA(Ser) + L-serine + ATP = L-seryl-tRNA(Ser) + AMP + diphosphate + H(+). The catalysed reaction is tRNA(Sec) + L-serine + ATP = L-seryl-tRNA(Sec) + AMP + diphosphate + H(+). Its pathway is aminoacyl-tRNA biosynthesis; selenocysteinyl-tRNA(Sec) biosynthesis; L-seryl-tRNA(Sec) from L-serine and tRNA(Sec): step 1/1. In terms of biological role, catalyzes the attachment of serine to tRNA(Ser). Is also able to aminoacylate tRNA(Sec) with serine, to form the misacylated tRNA L-seryl-tRNA(Sec), which will be further converted into selenocysteinyl-tRNA(Sec). The chain is Type-2 serine--tRNA ligase (serS) from Methanothermobacter thermautotrophicus (strain ATCC 29096 / DSM 1053 / JCM 10044 / NBRC 100330 / Delta H) (Methanobacterium thermoautotrophicum).